We begin with the raw amino-acid sequence, 207 residues long: Segregation and condensation protein B (207 aa).

The protein belongs to the ScpB family. As to quaternary structure, homodimer. Homodimerization may be required to stabilize the binding of ScpA to the Smc head domains. Component of a cohesin-like complex composed of ScpA, ScpB and the Smc homodimer, in which ScpA and ScpB bind to the head domain of Smc. The presence of the three proteins is required for the association of the complex with DNA.

Its subcellular location is the cytoplasm. Participates in chromosomal partition during cell division. May act via the formation of a condensin-like complex containing Smc and ScpA that pull DNA away from mid-cell into both cell halves. The sequence is that of Segregation and condensation protein B from Mycoplasma genitalium (strain ATCC 33530 / DSM 19775 / NCTC 10195 / G37) (Mycoplasmoides genitalium).